A 476-amino-acid chain; its full sequence is Cysteine--tRNA ligase (476 aa).

Zn(2+) is bound at residue cysteine 31. Positions 33–43 (PTVYNYAHIGN) match the 'HIGH' region motif. Zn(2+) is bound by residues cysteine 211, histidine 236, and glutamate 240. Residues 269-273 (KMSKS) carry the 'KMSKS' region motif. Lysine 272 lines the ATP pocket.

The protein belongs to the class-I aminoacyl-tRNA synthetase family. Monomer. The cofactor is Zn(2+).

It is found in the cytoplasm. The catalysed reaction is tRNA(Cys) + L-cysteine + ATP = L-cysteinyl-tRNA(Cys) + AMP + diphosphate. The sequence is that of Cysteine--tRNA ligase from Xanthomonas euvesicatoria pv. vesicatoria (strain 85-10) (Xanthomonas campestris pv. vesicatoria).